The primary structure comprises 872 residues: Valine--tRNA ligase (872 aa).

The short motif at 46 to 56 (PNVTGKLHIGH) is the 'HIGH' region element. Positions 523–527 (KMSKS) match the 'KMSKS' region motif. Residue Lys-526 coordinates ATP. Residues 796–872 (IEIANDSFIN…KDKLKELTND (77 aa)) are a coiled coil.

It belongs to the class-I aminoacyl-tRNA synthetase family. ValS type 1 subfamily. Monomer.

It localises to the cytoplasm. The catalysed reaction is tRNA(Val) + L-valine + ATP = L-valyl-tRNA(Val) + AMP + diphosphate. Its function is as follows. Catalyzes the attachment of valine to tRNA(Val). As ValRS can inadvertently accommodate and process structurally similar amino acids such as threonine, to avoid such errors, it has a 'posttransfer' editing activity that hydrolyzes mischarged Thr-tRNA(Val) in a tRNA-dependent manner. The protein is Valine--tRNA ligase of Mycoplasma mycoides subsp. mycoides SC (strain CCUG 32753 / NCTC 10114 / PG1).